The chain runs to 270 residues: Probable ribosomal RNA small subunit methyltransferase A (270 aa).

S-adenosyl-L-methionine is bound by residues His-19, Leu-21, Gly-46, Glu-67, Asp-92, and Asn-107.

It belongs to the class I-like SAM-binding methyltransferase superfamily. rRNA adenine N(6)-methyltransferase family. RsmA subfamily.

The protein localises to the cytoplasm. Functionally, specifically dimethylates two adjacent adenosines in the loop of a conserved hairpin near the 3'-end of 16S rRNA in the 30S particle. May play a critical role in biogenesis of 30S subunits. The sequence is that of Probable ribosomal RNA small subunit methyltransferase A from Methanococcoides burtonii (strain DSM 6242 / NBRC 107633 / OCM 468 / ACE-M).